We begin with the raw amino-acid sequence, 743 residues long: Inhibitor of nuclear factor kappa-B kinase subunit alpha (743 aa).

The region spanning 15-300 is the Protein kinase domain; the sequence is WDMKDRLGTG…MDCGRPQCFV (286 aa). Residues 21-29 and Lys44 contribute to the ATP site; that span reads LGTGGFGNV. Asp144 acts as the Proton acceptor in catalysis. Residues 453 to 474 form a leucine-zipper region; it reads LLRFNTNLTKMKNTMVSASQQL. The interval 736-741 is NEMO-binding; the sequence is LDFSWL.

Belongs to the protein kinase superfamily. Ser/Thr protein kinase family. I-kappa-B kinase subfamily.

It is found in the cytoplasm. It localises to the nucleus. It carries out the reaction L-seryl-[I-kappa-B protein] + ATP = O-phospho-L-seryl-[I-kappa-B protein] + ADP + H(+). Its activity is regulated as follows. Activated when phosphorylated and inactivated when dephosphorylated. Functionally, phosphorylates inhibitors of NF-kappa-B thus leading to the dissociation of the inhibitor/NF-kappa-B complex and ultimately the degradation of the inhibitor. Phosphorylates 'Ser-10' of histone H3 at NF-kappa-B-regulated promoters during inflammatory responses triggered by cytokines. The protein is Inhibitor of nuclear factor kappa-B kinase subunit alpha (chuk) of Xenopus tropicalis (Western clawed frog).